A 213-amino-acid polypeptide reads, in one-letter code: Amelogenin, X isoform (213 aa).

Positions 1–16 (MGTWILFACLLGAAFS) are cleaved as a signal peptide. Ser-32 is subject to Phosphoserine. Composition is skewed to low complexity over residues 96 to 105 (VPQQPMMPVP) and 114 to 160 (QHHQ…QPLQ). Residues 96-213 (VPQQPMMPVP…TDKTKREEVD (118 aa)) form a disordered region. A compositionally biased stretch (pro residues) spans 161-194 (PLQPQPPVHPIQPLPPQPPLPPIFPMQPLPPMLP).

It belongs to the amelogenin family. As to quaternary structure, interacts with KRT5. Post-translationally, phosphorylated by FAM20C in vitro.

It is found in the secreted. The protein localises to the extracellular space. Its subcellular location is the extracellular matrix. Functionally, plays a role in the biomineralization of teeth. Seems to regulate the formation of crystallites during the secretory stage of tooth enamel development. Thought to play a major role in the structural organization and mineralization of developing enamel. The sequence is that of Amelogenin, X isoform (AMELX) from Bos taurus (Bovine).